We begin with the raw amino-acid sequence, 108 residues long: Parvalbumin beta (108 aa).

EF-hand domains are found at residues 38-73 and 77-108; these read KPTD…FCSS and LSNA…LVRS. Ca(2+) contacts are provided by Asp51, Asp53, Ser55, Tyr57, Glu59, Glu62, Asp90, Asp92, Asp94, Lys96, and Glu101.

The protein belongs to the parvalbumin family.

In muscle, parvalbumin is thought to be involved in relaxation after contraction. It binds two calcium ions. The chain is Parvalbumin beta from Amphiuma means (Salamander).